The primary structure comprises 186 residues: MKELTLDSAVATLRAGGVIAYPTEAVWGLGCDPSHEAAVHMVLRLKQRPIEKGMILVAADLAQLEGWVRLQALPDARQRAVLASWPGANTWILPAGPRAQPWVTGEHSGIAVRISAHPLVAELCRAWGGPLVSTSANLAGEPPARRREELDPRLLRLLDGILDGETGGLAQPTPIRDALSGNVLRS.

Positions 3–186 constitute a YrdC-like domain; the sequence is ELTLDSAVAT…DALSGNVLRS (184 aa).

The protein belongs to the SUA5 family. TsaC subfamily.

Its subcellular location is the cytoplasm. The catalysed reaction is L-threonine + hydrogencarbonate + ATP = L-threonylcarbamoyladenylate + diphosphate + H2O. Required for the formation of a threonylcarbamoyl group on adenosine at position 37 (t(6)A37) in tRNAs that read codons beginning with adenine. Catalyzes the conversion of L-threonine, HCO(3)(-)/CO(2) and ATP to give threonylcarbamoyl-AMP (TC-AMP) as the acyladenylate intermediate, with the release of diphosphate. The protein is Threonylcarbamoyl-AMP synthase of Stenotrophomonas maltophilia (strain K279a).